The primary structure comprises 125 residues: Dirigent protein 22 (125 aa).

3 N-linked (GlcNAc...) asparagine glycosylation sites follow: asparagine 8, asparagine 30, and asparagine 65.

Belongs to the plant dirigent protein family. In terms of assembly, homodimer.

Its subcellular location is the secreted. The protein localises to the extracellular space. The protein resides in the apoplast. Dirigent proteins impart stereoselectivity on the phenoxy radical-coupling reaction, yielding optically active lignans from two molecules of coniferyl alcohol in the biosynthesis of lignans, flavonolignans, and alkaloids and thus plays a central role in plant secondary metabolism. The polypeptide is Dirigent protein 22 (DIR22) (Arabidopsis thaliana (Mouse-ear cress)).